Consider the following 402-residue polypeptide: GTPase HflX (402 aa).

The Hflx-type G domain occupies 181–350 (DTVGLIGYTN…MIIEHLNLSI (170 aa)). GTP is bound by residues 187 to 194 (GYTNAGKT), 212 to 216 (FTTLT), 233 to 236 (DTVG), 300 to 303 (NKVD), and 328 to 330 (SAK). Mg(2+)-binding residues include Thr194 and Thr214.

This sequence belongs to the TRAFAC class OBG-HflX-like GTPase superfamily. HflX GTPase family. In terms of assembly, monomer. Associates with the 50S ribosomal subunit. It depends on Mg(2+) as a cofactor.

The protein localises to the cytoplasm. Its function is as follows. GTPase that associates with the 50S ribosomal subunit and may have a role during protein synthesis or ribosome biogenesis. This Methanocaldococcus jannaschii (strain ATCC 43067 / DSM 2661 / JAL-1 / JCM 10045 / NBRC 100440) (Methanococcus jannaschii) protein is GTPase HflX.